The sequence spans 416 residues: Keratin, type I cuticular Ha1 (416 aa).

Residues 1-56 are head; the sequence is MPYNFCLPSLSCRTSCSSRPCVPPSCHSCTLPGACNIPANVSNCNWFCEGSFNGSE. Positions 56–367 constitute an IF rod domain; sequence EKETMQFLND…SLLESEDCNL (312 aa). The interval 57–91 is coil 1A; it reads KETMQFLNDRLASYLEKVRQLERDNAELENLIRER. Residues 92-102 form a linker 1 region; it reads SQQQEPLLCPS. The interval 103–203 is coil 1B; the sequence is YQSYFKTIEE…HEQEVNTLRC (101 aa). The interval 204–219 is linker 12; it reads QLGDRLNVEVDAAPTV. The tract at residues 220 to 363 is coil 2; the sequence is DLNRVLNETR…NTYRSLLESE (144 aa). Positions 364–416 are tail; sequence DCNLPSNPCATTNACSKPIGPCLSNPCTPCVPPAPCTPCAPRPRCGPCNSFVR.

It belongs to the intermediate filament family.

The sequence is that of Keratin, type I cuticular Ha1 (KRT31) from Pan troglodytes (Chimpanzee).